Here is a 380-residue protein sequence, read N- to C-terminus: Queuine tRNA-ribosyltransferase (380 aa).

Residue Asp96 is the Proton acceptor of the active site. Residues Asp96–Phe100, Asp150, Gln193, and Gly220 contribute to the substrate site. Positions Gly251–Ser257 are RNA binding. Catalysis depends on Asp270, which acts as the Nucleophile. Positions Thr275–Arg279 are RNA binding; important for wobble base 34 recognition. Residues Cys308, Cys310, Cys313, and His339 each coordinate Zn(2+).

It belongs to the queuine tRNA-ribosyltransferase family. In terms of assembly, homodimer. Within each dimer, one monomer is responsible for RNA recognition and catalysis, while the other monomer binds to the replacement base PreQ1. Requires Zn(2+) as cofactor.

The catalysed reaction is 7-aminomethyl-7-carbaguanine + guanosine(34) in tRNA = 7-aminomethyl-7-carbaguanosine(34) in tRNA + guanine. The protein operates within tRNA modification; tRNA-queuosine biosynthesis. Its function is as follows. Catalyzes the base-exchange of a guanine (G) residue with the queuine precursor 7-aminomethyl-7-deazaguanine (PreQ1) at position 34 (anticodon wobble position) in tRNAs with GU(N) anticodons (tRNA-Asp, -Asn, -His and -Tyr). Catalysis occurs through a double-displacement mechanism. The nucleophile active site attacks the C1' of nucleotide 34 to detach the guanine base from the RNA, forming a covalent enzyme-RNA intermediate. The proton acceptor active site deprotonates the incoming PreQ1, allowing a nucleophilic attack on the C1' of the ribose to form the product. After dissociation, two additional enzymatic reactions on the tRNA convert PreQ1 to queuine (Q), resulting in the hypermodified nucleoside queuosine (7-(((4,5-cis-dihydroxy-2-cyclopenten-1-yl)amino)methyl)-7-deazaguanosine). This chain is Queuine tRNA-ribosyltransferase, found in Streptococcus pneumoniae (strain Hungary19A-6).